Reading from the N-terminus, the 126-residue chain is Succinate dehydrogenase hydrophobic membrane anchor subunit (126 aa).

At 1–24 (MVYDFKAEIVKAKNSGSAKSGSHH) the chain is on the cytoplasmic side. A helical membrane pass occupies residues 25–45 (WLLQRVTGIILALCSVWLIYF). Residues 46-68 (TLTNKNNDINIIMLWELKKPFNV) lie on the Periplasmic side of the membrane. Residues 69–90 (VALLITVVISLYHAMLGMRVVI) form a helical membrane-spanning segment. Histidine 81 is a binding site for heme. The Cytoplasmic segment spans residues 91-100 (EDYISYHKLR). Tyrosine 93 is a binding site for a ubiquinone. A helical membrane pass occupies residues 101–124 (NTLIIIVQLFCIVTIVAFVVALFY).

In terms of assembly, part of an enzyme complex containing four subunits: a flavoprotein, an iron-sulfur protein, plus two membrane-anchoring proteins, SdhC and SdhD. The cofactor is heme.

It localises to the cell inner membrane. The protein operates within carbohydrate metabolism; tricarboxylic acid cycle. In terms of biological role, membrane-anchoring subunit of succinate dehydrogenase (SDH). The chain is Succinate dehydrogenase hydrophobic membrane anchor subunit (sdhD) from Rickettsia conorii (strain ATCC VR-613 / Malish 7).